Reading from the N-terminus, the 90-residue chain is MAMKSVSTLAVFAILFLVIVEMPEIKAQGSKCLKEYGGNVGFSYCAPRIFPSFCYRNCRKNKGAKGGRCRSGGAGAGSMICLCDYCSDKP.

The first 27 residues, 1–27 (MAMKSVSTLAVFAILFLVIVEMPEIKA), serve as a signal peptide directing secretion. 4 disulfide bridges follow: Cys-32–Cys-86, Cys-45–Cys-69, Cys-54–Cys-81, and Cys-58–Cys-83.

This sequence belongs to the DEFL family. Protease inhibitor I18 (RTI/MTI-2) subfamily.

It is found in the secreted. The protein is Defensin-like protein 193 (ATTI2) of Arabidopsis thaliana (Mouse-ear cress).